Reading from the N-terminus, the 578-residue chain is MDIQRSILIVALAVVSYLLVLQWNKDYGQPELPAASASMNTTQGLPDTPSASGTSSDVPTAQSSAAGSEAADKPVAVSDKLIQVKTDVLDLAIDPRGGDIVQLGLLQYPRRLDRPDVPFPLFDNGRERTYLAQSGLTGADGPDASSAGRPLFRSAQSSYQLADGQNELVVDLSFSHDGVNYIKRFTFHRGLKADCSDKEKAQKKIECINENAYQVGVSYLIDNQSGKTWSGNLFAQLKRDGSADPSSTTATGVSTYLGAAVWTPDSPYKKISTKDMDKEQFKESVQGGWVAWLQHYFVTAWVPTKGEQHQVMTRKDGQGNYIVGFTGPTLSVPAGSKVETDLTLYAGPKLQKHLKELSPGLELTVDYGFLWFIAQPIFWLLQHIHSLIGNWGWSIIALTVLIKLAFFPLSAASYRSMARMRAVSPKMQAIKEQHGDDRQKMSQAMMELYKKEKINPLGGCLPILVQMPVFLSLYWVLLESVEMRQAPWLGWITDLSVKDPFFILPIVMGGTMLIQQMLNPTPPDPMQAKVMKLMPIIFTFFFLWFPAGLVLYWVVNNCLSIAQQWYITRKIEAAAKTA.

The chain crosses the membrane as a helical span at residues 3-23 (IQRSILIVALAVVSYLLVLQW). Residues 34–72 (AASASMNTTQGLPDTPSASGTSSDVPTAQSSAAGSEAAD) are disordered. The segment covering 37–66 (ASMNTTQGLPDTPSASGTSSDVPTAQSSAA) has biased composition (polar residues). 5 helical membrane passes run 361 to 381 (LELT…FWLL), 387 to 407 (LIGN…LAFF), 457 to 477 (LGGC…YWVL), 500 to 520 (PFFI…MLNP), and 535 to 555 (PIIF…YWVV).

This sequence belongs to the OXA1/ALB3/YidC family. Type 1 subfamily. In terms of assembly, interacts with the Sec translocase complex via SecD. Specifically interacts with transmembrane segments of nascent integral membrane proteins during membrane integration.

It is found in the cell inner membrane. Functionally, required for the insertion and/or proper folding and/or complex formation of integral membrane proteins into the membrane. Involved in integration of membrane proteins that insert both dependently and independently of the Sec translocase complex, as well as at least some lipoproteins. Aids folding of multispanning membrane proteins. The chain is Membrane protein insertase YidC from Pseudomonas aeruginosa (strain ATCC 15692 / DSM 22644 / CIP 104116 / JCM 14847 / LMG 12228 / 1C / PRS 101 / PAO1).